The chain runs to 296 residues: Glycine--tRNA ligase alpha subunit (296 aa).

It belongs to the class-II aminoacyl-tRNA synthetase family. As to quaternary structure, tetramer of two alpha and two beta subunits.

Its subcellular location is the cytoplasm. The catalysed reaction is tRNA(Gly) + glycine + ATP = glycyl-tRNA(Gly) + AMP + diphosphate. This is Glycine--tRNA ligase alpha subunit from Exiguobacterium sibiricum (strain DSM 17290 / CCUG 55495 / CIP 109462 / JCM 13490 / 255-15).